Reading from the N-terminus, the 158-residue chain is SsrA-binding protein (158 aa).

Residues 131 to 158 (KQLHDKRQTEKERDWNKQKQRILQTNQR) form a disordered region. Basic and acidic residues predominate over residues 132-147 (QLHDKRQTEKERDWNK).

It belongs to the SmpB family.

It localises to the cytoplasm. Its function is as follows. Required for rescue of stalled ribosomes mediated by trans-translation. Binds to transfer-messenger RNA (tmRNA), required for stable association of tmRNA with ribosomes. tmRNA and SmpB together mimic tRNA shape, replacing the anticodon stem-loop with SmpB. tmRNA is encoded by the ssrA gene; the 2 termini fold to resemble tRNA(Ala) and it encodes a 'tag peptide', a short internal open reading frame. During trans-translation Ala-aminoacylated tmRNA acts like a tRNA, entering the A-site of stalled ribosomes, displacing the stalled mRNA. The ribosome then switches to translate the ORF on the tmRNA; the nascent peptide is terminated with the 'tag peptide' encoded by the tmRNA and targeted for degradation. The ribosome is freed to recommence translation, which seems to be the essential function of trans-translation. The sequence is that of SsrA-binding protein from Teredinibacter turnerae (strain ATCC 39867 / T7901).